A 185-amino-acid chain; its full sequence is MISSNDFRTGTTIEIDGAVWRVVEFLHVKPGKGSAFVRTKLKNAKTGNVVEKTFRAGETVPQAVLEKSTLQYTYKDGDDFVFMDMETYEEGRLTAATIGDRVKYLKEGMEANVITWNGQVIEVELPNSVVLEVIETDPGVKGDTATGGTKPAKVETGAQVMVPLFISVGERIKIDTRNDSYLGRE.

It belongs to the elongation factor P family.

Its subcellular location is the cytoplasm. It participates in protein biosynthesis; polypeptide chain elongation. Involved in peptide bond synthesis. Stimulates efficient translation and peptide-bond synthesis on native or reconstituted 70S ribosomes in vitro. Probably functions indirectly by altering the affinity of the ribosome for aminoacyl-tRNA, thus increasing their reactivity as acceptors for peptidyl transferase. This chain is Elongation factor P (efp), found in Synechococcus elongatus (strain ATCC 33912 / PCC 7942 / FACHB-805) (Anacystis nidulans R2).